The chain runs to 433 residues: Gamma-glutamyl phosphate reductase 1 (433 aa).

Belongs to the gamma-glutamyl phosphate reductase family.

It localises to the cytoplasm. It catalyses the reaction L-glutamate 5-semialdehyde + phosphate + NADP(+) = L-glutamyl 5-phosphate + NADPH + H(+). It participates in amino-acid biosynthesis; L-proline biosynthesis; L-glutamate 5-semialdehyde from L-glutamate: step 2/2. Its function is as follows. Catalyzes the NADPH-dependent reduction of L-glutamate 5-phosphate into L-glutamate 5-semialdehyde and phosphate. The product spontaneously undergoes cyclization to form 1-pyrroline-5-carboxylate. The chain is Gamma-glutamyl phosphate reductase 1 from Synechocystis sp. (strain ATCC 27184 / PCC 6803 / Kazusa).